A 100-amino-acid polypeptide reads, in one-letter code: Urease subunit gamma (100 aa).

The protein belongs to the urease gamma subunit family. In terms of assembly, heterotrimer of UreA (gamma), UreB (beta) and UreC (alpha) subunits. Three heterotrimers associate to form the active enzyme.

Its subcellular location is the cytoplasm. The catalysed reaction is urea + 2 H2O + H(+) = hydrogencarbonate + 2 NH4(+). Its pathway is nitrogen metabolism; urea degradation; CO(2) and NH(3) from urea (urease route): step 1/1. This chain is Urease subunit gamma, found in Cupriavidus necator (strain ATCC 17699 / DSM 428 / KCTC 22496 / NCIMB 10442 / H16 / Stanier 337) (Ralstonia eutropha).